A 150-amino-acid polypeptide reads, in one-letter code: Large ribosomal subunit protein bL9 (150 aa).

Belongs to the bacterial ribosomal protein bL9 family.

Its function is as follows. Binds to the 23S rRNA. This is Large ribosomal subunit protein bL9 from Polynucleobacter asymbioticus (strain DSM 18221 / CIP 109841 / QLW-P1DMWA-1) (Polynucleobacter necessarius subsp. asymbioticus).